A 439-amino-acid polypeptide reads, in one-letter code: Glutamyl-tRNA reductase (439 aa).

Substrate contacts are provided by residues 46-49 (TCNR), Ser111, 116-118 (EGE), and Gln122. Cys47 (nucleophile) is an active-site residue. Residue 191–196 (GTGAYA) coordinates NADP(+).

This sequence belongs to the glutamyl-tRNA reductase family. As to quaternary structure, homodimer.

It catalyses the reaction (S)-4-amino-5-oxopentanoate + tRNA(Glu) + NADP(+) = L-glutamyl-tRNA(Glu) + NADPH + H(+). It functions in the pathway porphyrin-containing compound metabolism; protoporphyrin-IX biosynthesis; 5-aminolevulinate from L-glutamyl-tRNA(Glu): step 1/2. Functionally, catalyzes the NADPH-dependent reduction of glutamyl-tRNA(Glu) to glutamate 1-semialdehyde (GSA). The chain is Glutamyl-tRNA reductase from Clavibacter michiganensis subsp. michiganensis (strain NCPPB 382).